The primary structure comprises 210 residues: Ribonuclease HII (210 aa).

The 193-residue stretch at 18–210 (GLIAGVDEVG…FKPVKALLGL (193 aa)) folds into the RNase H type-2 domain. A divalent metal cation contacts are provided by aspartate 24, glutamate 25, and aspartate 116.

It belongs to the RNase HII family. The cofactor is Mn(2+). Mg(2+) is required as a cofactor.

The protein resides in the cytoplasm. It carries out the reaction Endonucleolytic cleavage to 5'-phosphomonoester.. Its function is as follows. Endonuclease that specifically degrades the RNA of RNA-DNA hybrids. The sequence is that of Ribonuclease HII from Shewanella baltica (strain OS155 / ATCC BAA-1091).